The chain runs to 239 residues: UPF0173 metal-dependent hydrolase Dvul_0081 (239 aa).

The protein belongs to the UPF0173 family.

The sequence is that of UPF0173 metal-dependent hydrolase Dvul_0081 from Nitratidesulfovibrio vulgaris (strain DP4) (Desulfovibrio vulgaris).